Consider the following 166-residue polypeptide: Small ribosomal subunit protein uS5 (166 aa).

The S5 DRBM domain occupies 11 to 74; it reads LQEKLIAVNR…EKARRNMMNV (64 aa).

Belongs to the universal ribosomal protein uS5 family. As to quaternary structure, part of the 30S ribosomal subunit. Contacts proteins S4 and S8.

With S4 and S12 plays an important role in translational accuracy. Its function is as follows. Located at the back of the 30S subunit body where it stabilizes the conformation of the head with respect to the body. The chain is Small ribosomal subunit protein uS5 from Pectobacterium atrosepticum (strain SCRI 1043 / ATCC BAA-672) (Erwinia carotovora subsp. atroseptica).